We begin with the raw amino-acid sequence, 183 residues long: Oligoribonuclease (183 aa).

The Exonuclease domain maps to 9 to 172; that stretch reads LIWIDLEMTG…DDIRDSISEL (164 aa). The active site involves Y130.

Belongs to the oligoribonuclease family.

The protein resides in the cytoplasm. Functionally, 3'-to-5' exoribonuclease specific for small oligoribonucleotides. The polypeptide is Oligoribonuclease (Acinetobacter baylyi (strain ATCC 33305 / BD413 / ADP1)).